Here is a 219-residue protein sequence, read N- to C-terminus: Alpha N-terminal protein methyltransferase 1 (219 aa).

Residues glycine 64, arginine 69, 111-112 (LQ), and glutamine 127 contribute to the S-adenosyl-L-methionine site.

It belongs to the methyltransferase superfamily. NTM1 family.

The protein localises to the cytoplasm. It carries out the reaction N-terminal L-alanyl-L-prolyl-L-lysyl-[protein] + 3 S-adenosyl-L-methionine = N-terminal N,N,N-trimethyl-L-alanyl-L-prolyl-L-lysyl-[protein] + 3 S-adenosyl-L-homocysteine + 3 H(+). The catalysed reaction is N-terminal L-seryl-L-prolyl-L-lysyl-[protein] + 3 S-adenosyl-L-methionine = N-terminal N,N,N-trimethyl-L-seryl-L-prolyl-L-lysyl-[protein] + 3 S-adenosyl-L-homocysteine + 3 H(+). The enzyme catalyses N-terminal L-prolyl-L-prolyl-L-lysyl-[protein] + 2 S-adenosyl-L-methionine = N-terminal N,N-dimethyl-L-prolyl-L-prolyl-L-lysyl-[protein] + 2 S-adenosyl-L-homocysteine + 2 H(+). Its function is as follows. Alpha-N-methyltransferase that methylates the N-terminus of target proteins containing the N-terminal motif [Ala/Pro/Ser]-Pro-Lys when the initiator Met is cleaved. Specifically catalyzes mono-, di- or tri-methylation of exposed alpha-amino group of Ala or Ser residue in the [Ala/Ser]-Pro-Lys motif and mono- or di-methylation of Pro in the Pro-Pro-Lys motif. The polypeptide is Alpha N-terminal protein methyltransferase 1 (tae1) (Schizosaccharomyces pombe (strain 972 / ATCC 24843) (Fission yeast)).